We begin with the raw amino-acid sequence, 309 residues long: UDP-N-acetylenolpyruvoylglucosamine reductase (309 aa).

In terms of domain architecture, FAD-binding PCMH-type spans 33 to 198 (RVGGPAQVLF…TSARFRGTPA (166 aa)). Arg178 is a catalytic residue. Ser227 (proton donor) is an active-site residue. Glu297 is a catalytic residue.

It belongs to the MurB family. FAD serves as cofactor.

The protein localises to the cytoplasm. The catalysed reaction is UDP-N-acetyl-alpha-D-muramate + NADP(+) = UDP-N-acetyl-3-O-(1-carboxyvinyl)-alpha-D-glucosamine + NADPH + H(+). It functions in the pathway cell wall biogenesis; peptidoglycan biosynthesis. In terms of biological role, cell wall formation. The sequence is that of UDP-N-acetylenolpyruvoylglucosamine reductase from Rhodopseudomonas palustris (strain HaA2).